The primary structure comprises 360 residues: Dehydrogenase mokE (360 aa).

Position 50 to 53 (50 to 53 (SDTK)) interacts with NADP(+). 134-141 (AGISTAGL) lines the substrate pocket. Residues 173-176 (STAT), 196-199 (SPHN), Tyr214, 261-262 (LN), and Thr279 contribute to the NADP(+) site. 281–285 (GPTIF) provides a ligand contact to substrate. 350–351 (LS) is a binding site for NADP(+).

Belongs to the zinc-containing alcohol dehydrogenase family. Monomer.

The protein operates within polyketide biosynthesis; lovastatin biosynthesis. Dehydrogenase; part of the gene cluster that mediates the biosynthesis of monakolin K, also known as lovastatin, and which acts as a potent competitive inhibitor of HMG-CoA reductase. Monakolin K biosynthesis is performed in two stages. The first stage is catalyzed by the nonaketide synthase mokA, which belongs to type I polyketide synthases and catalyzes the iterative nine-step formation of the polyketide. This PKS stage is completed by the action of dehydrogenase mokE, which catalyzes the NADPH-dependent reduction of the unsaturated tetra-, penta- and heptaketide intermediates that arise during the mokA-mediated biosynthesis of the nonaketide chain and leads to dihydromonacolin L. Covalently bound dihydromonacolin L is released from mokA by the mokD esterase. Conversion of dihydromonacolin L into monacolin L and then monacolin J is subsequently performed with the participation of molecular oxygen and P450 monoogygenase mokC. Finally, mokF performs the conversion of monacoline J to monacoline K through the addition of the side-chain diketide moiety (2R)-2-methylbutanoate produced by the diketide synthase mokB. The sequence is that of Dehydrogenase mokE from Monascus pilosus (Red mold).